We begin with the raw amino-acid sequence, 303 residues long: Uracil phosphoribosyltransferase (303 aa).

A unknown region spans residues 1–86 (MHIIMKTILA…RYVSSTPTDS (86 aa)). A UPRTase region spans residues 87–303 (LSSKPLAAVY…DRLCGTSNPS (217 aa)). Residues arginine 170, arginine 195, and 222-230 (DPMLATGGS) contribute to the 5-phospho-alpha-D-ribose 1-diphosphate site. Residues isoleucine 285 and 290–292 (GDA) each bind uracil. 5-phospho-alpha-D-ribose 1-diphosphate is bound at residue aspartate 291.

Belongs to the UPRTase family. Mg(2+) is required as a cofactor.

It carries out the reaction UMP + diphosphate = 5-phospho-alpha-D-ribose 1-diphosphate + uracil. It functions in the pathway pyrimidine metabolism; UMP biosynthesis via salvage pathway; UMP from uracil: step 1/1. Allosterically activated by GTP. Its function is as follows. Catalyzes the conversion of uracil and 5-phospho-alpha-D-ribose 1-diphosphate (PRPP) to UMP and diphosphate. In Chlamydia muridarum (strain MoPn / Nigg), this protein is Uracil phosphoribosyltransferase (upp).